A 627-amino-acid polypeptide reads, in one-letter code: uncharacterized protein (627 aa).

Disordered regions lie at residues 141–187 (LRYP…TPPS) and 490–510 (ENEN…GPRT). Over residues 491–510 (NENTNGSANNSTYTNGGPRT) the composition is skewed to polar residues. Ser-559 bears the Phosphoserine mark.

This is an uncharacterized protein from Saccharomyces cerevisiae (strain ATCC 204508 / S288c) (Baker's yeast).